Reading from the N-terminus, the 179-residue chain is Signal peptidase complex catalytic subunit SEC11A (179 aa).

Over 1–16 (MLSLDFLDDVRRMNKR) the chain is Cytoplasmic. The chain crosses the membrane as a helical; Signal-anchor for type II membrane protein span at residues 17 to 36 (QLYYQVLNFGMIVSSALMIW). Residues 37–179 (KGLMLITGSE…LGLFVLVHRE (143 aa)) are Lumenal-facing. Active-site charge relay system residues include serine 56, histidine 96, and aspartate 122. Positions 165–176 (AVLFLLGLFVLV) are C-terminal short (CTS) helix.

It belongs to the peptidase S26B family. As to quaternary structure, component of the signal peptidase complex paralog A (SPC-A) composed of a catalytic subunit SEC11A and three accessory subunits SPCS1, SPCS2 and SPCS3. Within the complex, interacts with SPCS2 and SPCS3. The complex induces a local thinning of the ER membrane which is used to measure the length of the signal peptide (SP) h-region of protein substrates. This ensures the selectivity of the complex towards h-regions shorter than 18-20 amino acids.

The protein localises to the endoplasmic reticulum membrane. It catalyses the reaction Cleavage of hydrophobic, N-terminal signal or leader sequences from secreted and periplasmic proteins.. Its function is as follows. Catalytic component of the signal peptidase complex (SPC) which catalyzes the cleavage of N-terminal signal sequences from nascent proteins as they are translocated into the lumen of the endoplasmic reticulum. Specifically cleaves N-terminal signal peptides that contain a hydrophobic alpha-helix (h-region) shorter than 18-20 amino acids. This Rattus norvegicus (Rat) protein is Signal peptidase complex catalytic subunit SEC11A (Sec11a).